Reading from the N-terminus, the 211-residue chain is N-(5'-phosphoribosyl)anthranilate isomerase (211 aa).

The protein belongs to the TrpF family.

The catalysed reaction is N-(5-phospho-beta-D-ribosyl)anthranilate = 1-(2-carboxyphenylamino)-1-deoxy-D-ribulose 5-phosphate. It participates in amino-acid biosynthesis; L-tryptophan biosynthesis; L-tryptophan from chorismate: step 3/5. In Pseudomonas aeruginosa (strain LESB58), this protein is N-(5'-phosphoribosyl)anthranilate isomerase.